The primary structure comprises 1578 residues: Pentafunctional AROM polypeptide (1578 aa).

Residues 1 to 384 are 3-dehydroquinate synthase; that stretch reads MTGPTKISIL…YEPRASVVPN (384 aa). Residues 44–46, 81–84, 114–116, and Asp-119 contribute to the NAD(+) site; these read DTN, EVSK, and GGV. Position 130 (Arg-130) interacts with 7-phospho-2-dehydro-3-deoxy-D-arabino-heptonate. 139-140 contributes to the NAD(+) binding site; the sequence is TT. 2 residues coordinate 7-phospho-2-dehydro-3-deoxy-D-arabino-heptonate: Asp-146 and Lys-152. Lys-161 is an NAD(+) binding site. Asn-162 is a binding site for 7-phospho-2-dehydro-3-deoxy-D-arabino-heptonate. NAD(+) is bound by residues 179-182 and Asn-190; that span reads FLET. Glu-194 lines the Zn(2+) pocket. Residues 194-197 and Lys-250 contribute to the 7-phospho-2-dehydro-3-deoxy-D-arabino-heptonate site; that span reads EVIK. Glu-260 acts as the Proton acceptor; for 3-dehydroquinate synthase activity in catalysis. 7-phospho-2-dehydro-3-deoxy-D-arabino-heptonate contacts are provided by residues 264-268 and His-271; that span reads RNLLN. His-271 serves as a coordination point for Zn(2+). His-275 (proton acceptor; for 3-dehydroquinate synthase activity) is an active-site residue. His-287 and Lys-356 together coordinate 7-phospho-2-dehydro-3-deoxy-D-arabino-heptonate. Residue His-287 participates in Zn(2+) binding. Residues 397-842 form an EPSP synthase region; the sequence is VYPGVSPASE…WDTLRQKFAV (446 aa). Residue Cys-824 is the For EPSP synthase activity of the active site. Residues 864 to 1055 form a shikimate kinase region; the sequence is SASVFIIGMR…KKKQHSFFVS (192 aa). Residue 871 to 878 coordinates ATP; that stretch reads GMRGAGKT. The segment at 1056–1276 is 3-dehydroquinase; it reads LTLPDVRGAD…AAPGQLSATD (221 aa). His-1179 acts as the Proton acceptor; for 3-dehydroquinate dehydratase activity in catalysis. Lys-1207 functions as the Schiff-base intermediate with substrate; for 3-dehydroquinate dehydratase activity in the catalytic mechanism. The tract at residues 1289–1578 is shikimate dehydrogenase; that stretch reads KKRFALFGSP…YERARAIVLG (290 aa).

It in the N-terminal section; belongs to the sugar phosphate cyclases superfamily. Dehydroquinate synthase family. In the 2nd section; belongs to the EPSP synthase family. This sequence in the 3rd section; belongs to the shikimate kinase family. The protein in the 4th section; belongs to the type-I 3-dehydroquinase family. It in the C-terminal section; belongs to the shikimate dehydrogenase family. As to quaternary structure, homodimer. The cofactor is Zn(2+).

The protein localises to the cytoplasm. It carries out the reaction 7-phospho-2-dehydro-3-deoxy-D-arabino-heptonate = 3-dehydroquinate + phosphate. The catalysed reaction is 3-dehydroquinate = 3-dehydroshikimate + H2O. The enzyme catalyses shikimate + NADP(+) = 3-dehydroshikimate + NADPH + H(+). It catalyses the reaction shikimate + ATP = 3-phosphoshikimate + ADP + H(+). It carries out the reaction 3-phosphoshikimate + phosphoenolpyruvate = 5-O-(1-carboxyvinyl)-3-phosphoshikimate + phosphate. It functions in the pathway metabolic intermediate biosynthesis; chorismate biosynthesis; chorismate from D-erythrose 4-phosphate and phosphoenolpyruvate: step 2/7. The protein operates within metabolic intermediate biosynthesis; chorismate biosynthesis; chorismate from D-erythrose 4-phosphate and phosphoenolpyruvate: step 3/7. It participates in metabolic intermediate biosynthesis; chorismate biosynthesis; chorismate from D-erythrose 4-phosphate and phosphoenolpyruvate: step 4/7. Its pathway is metabolic intermediate biosynthesis; chorismate biosynthesis; chorismate from D-erythrose 4-phosphate and phosphoenolpyruvate: step 5/7. It functions in the pathway metabolic intermediate biosynthesis; chorismate biosynthesis; chorismate from D-erythrose 4-phosphate and phosphoenolpyruvate: step 6/7. The AROM polypeptide catalyzes 5 consecutive enzymatic reactions in prechorismate polyaromatic amino acid biosynthesis. The chain is Pentafunctional AROM polypeptide from Neosartorya fischeri (strain ATCC 1020 / DSM 3700 / CBS 544.65 / FGSC A1164 / JCM 1740 / NRRL 181 / WB 181) (Aspergillus fischerianus).